Consider the following 250-residue polypeptide: Methylthioribulose-1-phosphate dehydratase (250 aa).

Substrate is bound at residue cysteine 103. Zn(2+) is bound by residues histidine 121 and histidine 123. Glutamate 146 serves as the catalytic Proton donor/acceptor. Histidine 211 contacts Zn(2+).

This sequence belongs to the aldolase class II family. MtnB subfamily. Requires Zn(2+) as cofactor.

It is found in the cytoplasm. The enzyme catalyses 5-(methylsulfanyl)-D-ribulose 1-phosphate = 5-methylsulfanyl-2,3-dioxopentyl phosphate + H2O. It functions in the pathway amino-acid biosynthesis; L-methionine biosynthesis via salvage pathway; L-methionine from S-methyl-5-thio-alpha-D-ribose 1-phosphate: step 2/6. In terms of biological role, catalyzes the dehydration of methylthioribulose-1-phosphate (MTRu-1-P) into 2,3-diketo-5-methylthiopentyl-1-phosphate (DK-MTP-1-P). The chain is Methylthioribulose-1-phosphate dehydratase from Clavispora lusitaniae (strain ATCC 42720) (Yeast).